The primary structure comprises 543 residues: Probable protein kinase UbiB (543 aa).

The 378-residue stretch at 123–500 (DFDQQPLASA…HRRHAQARFL (378 aa)) folds into the Protein kinase domain. ATP is bound by residues 129–137 (LASASVAQV) and lysine 152. Aspartate 286 serves as the catalytic Proton acceptor. Helical transmembrane passes span 499 to 519 (FLLG…PTHE) and 521 to 541 (LASA…WKIS).

The protein belongs to the ABC1 family. UbiB subfamily.

The protein resides in the cell inner membrane. It participates in cofactor biosynthesis; ubiquinone biosynthesis [regulation]. Its function is as follows. Is probably a protein kinase regulator of UbiI activity which is involved in aerobic coenzyme Q (ubiquinone) biosynthesis. The chain is Probable protein kinase UbiB from Tolumonas auensis (strain DSM 9187 / NBRC 110442 / TA 4).